Here is a 115-residue protein sequence, read N- to C-terminus: Photosystem II reaction center Psb28 protein (115 aa).

This sequence belongs to the Psb28 family. Part of the photosystem II complex.

The protein resides in the plastid. It localises to the chloroplast thylakoid membrane. In Pyropia yezoensis (Susabi-nori), this protein is Photosystem II reaction center Psb28 protein.